We begin with the raw amino-acid sequence, 561 residues long: Putative transport protein ASA_2308 (561 aa).

Transmembrane regions (helical) follow at residues 8–28 (LLHQSDSLLLFVVLAFGLLLG), 37–57 (IGNTIGVLFTALLFGQMGFEF), 66–86 (FMLFIFCVGIEAGPHFFSVFL), 90–110 (IHYITLTLVILLTALLLTVGL), and 161–181 (NMGIGYALTYLVGLVGLMLVV). 2 consecutive RCK C-terminal domains span residues 206-291 (SDNE…NYRN) and 293-376 (KEVF…KIGF). 5 helical membrane-spanning segments follow: residues 386 to 406 (LVAFTTFFVLGLLIGSVSLVF), 409 to 429 (LEFGLGNAVGLLLAGILMGYL), 450 to 470 (LGLAVFMVSTGLKAGGGILDH), 476 to 496 (AVVLFSGMLVTTLPVLVGYLF), and 541 to 561 (TYAVANVMLTLAGSFIIGFWF).

The protein belongs to the AAE transporter (TC 2.A.81) family. YbjL subfamily.

It is found in the cell membrane. In Aeromonas salmonicida (strain A449), this protein is Putative transport protein ASA_2308.